A 60-amino-acid chain; its full sequence is Cytotoxin sagitoxin (60 aa).

Intrachain disulfides connect Cys-3–Cys-21, Cys-14–Cys-38, Cys-42–Cys-53, and Cys-54–Cys-59.

Belongs to the three-finger toxin family. Short-chain subfamily. Type IA cytotoxin sub-subfamily. As to quaternary structure, monomer in solution; Homodimer and oligomer (homohexamer) in the presence of negatively charged lipids forming a pore with a size ranging between 20 and 30 Angstroms. Expressed by the venom gland.

It is found in the secreted. The protein resides in the target cell membrane. Functionally, shows cytolytic activity on many different cells by forming pore in lipid membranes. In vivo, increases heart rate or kill the animal by cardiac arrest. In addition, it binds to heparin with high affinity, interacts with Kv channel-interacting protein 1 (KCNIP1) in a calcium-independent manner, and binds to integrin alpha-V/beta-3 (ITGAV/ITGB3) with moderate affinity. The sequence is that of Cytotoxin sagitoxin from Naja sagittifera (Andaman cobra).